The chain runs to 303 residues: Olfactory receptor 10A2 (303 aa).

At 1–12 (MSFSSLPTEIQS) the chain is on the extracellular side. The helical transmembrane segment at 13 to 33 (LLFLTFLTIYLVTLMGNCLII) threads the bilayer. The Cytoplasmic segment spans residues 34-41 (LVTLADPM). A helical membrane pass occupies residues 42-62 (LHSPMYFFLRNLSFLEIGFNL). Residues 63 to 86 (VIVPKMLGTLLAQDTTISFLGCAT) are Extracellular-facing. Cysteine 84 and cysteine 176 are disulfide-bonded. Residues 87 to 107 (QMYFFFFFGVAECFLLATMAY) traverse the membrane as a helical segment. Residues 108–126 (DRYVAICSPLHYPVIMNQR) are Cytoplasmic-facing. Residues 127–147 (TRAKLAAASWFPGFPVATVQT) form a helical membrane-spanning segment. Residues 148–184 (TWLFSFPFCGTNKVNHFFCDSPPVLRLVCADTALFEI) are Extracellular-facing. The helical transmembrane segment at 185 to 204 (YAIVGTILVVMIPCLLILCS) threads the bilayer. The Cytoplasmic portion of the chain corresponds to 205-224 (YTHIAAAILKIPSAKGKNKA). The chain crosses the membrane as a helical span at residues 225-245 (FSTCSSHLLVVSLFYISLSLT). Residues 246 to 258 (YFRPKSNNSPEGK) are Extracellular-facing. Residues 259–279 (KLLSLSYTVMTPMLNPIIYSL) form a helical membrane-spanning segment. Over 280-301 (RNNEVKNALSRTVSKALALRNC) the chain is Cytoplasmic.

Belongs to the G-protein coupled receptor 1 family.

The protein resides in the cell membrane. In terms of biological role, odorant receptor. This Homo sapiens (Human) protein is Olfactory receptor 10A2 (OR10A2).